The chain runs to 757 residues: POU domain, class 2, transcription factor 1 (757 aa).

4 disordered regions span residues 1–43 (MKLH…QTNG), 271–295 (AATPVQQLPQSQTTPKRIDTPSLEE), 375–398 (SLSNQSVLNSPGHGMEGLNRRRKK), and 532–574 (VSSV…TSPL). Polar residues-rich tracts occupy residues 19–43 (RMNNPSETSKSSESGDGNTGTQTNG) and 275–285 (VQQLPQSQTTP). The 75-residue stretch at 294–368 (EEPSDLEELE…LLEKWLNDAE (75 aa)) folds into the POU-specific domain. Residues 395-454 (RRKKRTSIETNIRVALEKSFLENQKPTSEEITMIADQLNMEKEVIRVWFCNRRQKEKRIN) constitute a DNA-binding region (homeobox).

The protein belongs to the POU transcription factor family. Class-2 subfamily.

The protein resides in the cytoplasm. Its subcellular location is the nucleus. In terms of biological role, transcription factor that binds to the octamer motif (5'-ATTTGCAT-3') and activates the promoters of the genes for some small nuclear RNAs (snRNA) and histone H2B. Acts downstream of Notch signaling during radial glia formation. Regulates apoptosis, possibly via an FGF-signaling pathway. The protein is POU domain, class 2, transcription factor 1 of Xenopus tropicalis (Western clawed frog).